Here is a 150-residue protein sequence, read N- to C-terminus: MQIILLDNVSNLGKLGEQVNVKAGYARNYLVPQGKAVPATRKNVEYFEKCRVELVAKLANIKSAAEARANKINELGSITILSKAGEEGKLFGSIGTRDIANAISMAGINTKKSEVRLPNGVLRTTGNHIVSIRIHSDISVAINVLVIAEK.

Belongs to the bacterial ribosomal protein bL9 family.

Functionally, binds to the 23S rRNA. The sequence is that of Large ribosomal subunit protein bL9 from Baumannia cicadellinicola subsp. Homalodisca coagulata.